The sequence spans 450 residues: Grayanic acid biosynthesis cluster O-methyltransferase (450 aa).

Asp-254 serves as a coordination point for S-adenosyl-L-methionine. His-301 acts as the Proton acceptor in catalysis.

This sequence belongs to the class I-like SAM-binding methyltransferase superfamily. Cation-independent O-methyltransferase family. COMT subfamily.

It functions in the pathway secondary metabolite biosynthesis. Functionally, non-reducing polyketide synthase; part of the gene cluster that mediates the biosynthesis of orcinol depsidone grayanic acid (GRA), the only major secondary metabolite known in C.grayi. The first step consists in the ring and depside synthesis by PKS16 leading to 4-O-demethylsphaerophorin, involving different orcinol-like rings, one with acetyl CoA and the other with octanoyl CoA as the starter. Further depsidone formation by the GRA cluster-specific cytochrome P450 leads to 4-O-demethylgrayanic acid. Finally, the cluster specific O-methyltransferase probably converts the 4-O-demethylgrayanic acid into grayanic acid. This is Grayanic acid biosynthesis cluster O-methyltransferase from Cladonia grayi (Gray's cup lichen).